The following is a 488-amino-acid chain: Glutamyl-tRNA(Gln) amidotransferase subunit A (488 aa).

Catalysis depends on charge relay system residues Lys-77 and Ser-152. Ser-176 serves as the catalytic Acyl-ester intermediate.

The protein belongs to the amidase family. GatA subfamily. In terms of assembly, heterotrimer of A, B and C subunits.

It catalyses the reaction L-glutamyl-tRNA(Gln) + L-glutamine + ATP + H2O = L-glutaminyl-tRNA(Gln) + L-glutamate + ADP + phosphate + H(+). In terms of biological role, allows the formation of correctly charged Gln-tRNA(Gln) through the transamidation of misacylated Glu-tRNA(Gln) in organisms which lack glutaminyl-tRNA synthetase. The reaction takes place in the presence of glutamine and ATP through an activated gamma-phospho-Glu-tRNA(Gln). The chain is Glutamyl-tRNA(Gln) amidotransferase subunit A from Streptococcus pneumoniae (strain Hungary19A-6).